The chain runs to 506 residues: Ent-kaurenoic acid oxidase (506 aa).

Residues Ala-11–Val-31 form a helical membrane-spanning segment. Cys-451 provides a ligand contact to heme.

It belongs to the cytochrome P450 family. Requires heme as cofactor. Expressed in roots and panicles. Expressed at low levels in vegetative shoot apices, leaf sheaths, leaf blades and stems.

Its subcellular location is the endoplasmic reticulum membrane. It catalyses the reaction ent-kaur-16-en-19-oate + 3 reduced [NADPH--hemoprotein reductase] + 3 O2 = gibberellin A12 + 3 oxidized [NADPH--hemoprotein reductase] + 4 H2O + 4 H(+). The enzyme catalyses ent-kaur-16-en-19-oate + reduced [NADPH--hemoprotein reductase] + O2 = ent-7alpha-hydroxykaur-16-en-19-oate + oxidized [NADPH--hemoprotein reductase] + H2O + H(+). It carries out the reaction ent-7alpha-hydroxykaur-16-en-19-oate + reduced [NADPH--hemoprotein reductase] + O2 = gibberellin A12 aldehyde + oxidized [NADPH--hemoprotein reductase] + 2 H2O + H(+). The catalysed reaction is gibberellin A12 aldehyde + reduced [NADPH--hemoprotein reductase] + O2 = gibberellin A12 + oxidized [NADPH--hemoprotein reductase] + H2O + 2 H(+). The protein operates within plant hormone biosynthesis; gibberellin biosynthesis. Involved in gibberellin (GA) biosynthesis. Catalyzes three successive oxidations of ent-kaurenoic acid giving gibberellin 12 (GA12), a key step in GAs biosynthesis. GAs, which are involved many processes, including stem elongation, play a central role in plant development. Required for pollen germination and elongation. In Oryza sativa subsp. japonica (Rice), this protein is Ent-kaurenoic acid oxidase.